Reading from the N-terminus, the 864-residue chain is MHERYVPADVEAAAQGDWRAADAYKTQEDAQKPKFYCVSMLPYPSGKLHMGHVRNYTINDVMYRYLRMNGYNVLMPMGWDAFGMPAENAAMANGVPPAKWTYDNIDYMKGQMQSMGLAIDWSREIATCKPDYYKWNQWLFLKMLEKGIAYKKTGTVNWDPVDQTVLANEQVIDGRGWRSGALVEKREIPMYYLRITQYADELLNDLDGLGWPERVKIMQQNWIGKSFGVNFGFPYELDGEKQLLRVFTTRADTIMGVTFCAIAAEHPLATRLAQGKPELQAFIDECKRGGVAEADMATMEKKGVATGFSVTHPLTGEPVEVWIGNYVLMSYGEGAVMGVPGHDERDFAFAKKYGLPIKQVIAAEGHTYSLDAWQEWYGDKDIAVCINSGKYDGLGYAAAVDAVAADLKAGGFGDKQVTWRLRDWGISRQRYWGTPIPIIHCPSCGDVPVPEKDLPVVLPEDLVPDGSGNPLAKSEAFLNCTCPKCGAAAKRETDTMDTFVDSSWYFSRYTAPDAETMVDARTDYWMPMDQYIGGIEHAILHLLYSRFWTKVMRDLGLVKFGEPAKNLLTQGMVLNETYYREDAAGKKTWYNPADVTVTHDDKGRPVGATLNADGQPVVLGGIEKMSKSKNNGVDPQVLIDQYGADTARLFTMFAAPPEQQLEWSGAGVEGASRFLRRVWSFGYANREALASRAGFDAAALGDADKALRREIYSVLKQADFDYQRLQYNTVVSAAMKMLNAIDGAKGATPGVLREAYGVLLRVLYPVVPHVTYELWKALGYADEFGPLLDAPWPKVDEAALEQAEIELVLQVNGKVRGALKVAKDASREAIEAAALADDAFAKFGEGKPAKKIVVVPGRLVNIVV.

A 'HIGH' region motif is present at residues 42–52 (PYPSGKLHMGH). The 'KMSKS' region motif lies at 624 to 628 (KMSKS). Lys627 lines the ATP pocket.

Belongs to the class-I aminoacyl-tRNA synthetase family.

It localises to the cytoplasm. The catalysed reaction is tRNA(Leu) + L-leucine + ATP = L-leucyl-tRNA(Leu) + AMP + diphosphate. The chain is Leucine--tRNA ligase from Burkholderia multivorans (strain ATCC 17616 / 249).